A 141-amino-acid polypeptide reads, in one-letter code: Large ribosomal subunit protein uL11 (141 aa).

It belongs to the universal ribosomal protein uL11 family. Part of the ribosomal stalk of the 50S ribosomal subunit. Interacts with L10 and the large rRNA to form the base of the stalk. L10 forms an elongated spine to which L12 dimers bind in a sequential fashion forming a multimeric L10(L12)X complex. One or more lysine residues are methylated.

In terms of biological role, forms part of the ribosomal stalk which helps the ribosome interact with GTP-bound translation factors. This is Large ribosomal subunit protein uL11 from Synechocystis sp. (strain ATCC 27184 / PCC 6803 / Kazusa).